The following is an 869-amino-acid chain: Iron-sulfur cluster assembly SufBD family protein ML0593 (869 aa).

Residues 344–477 form the DOD-type homing endonuclease domain; sequence LLGLWLGDGH…VRQLAIGCGL (134 aa).

Belongs to the iron-sulfur cluster assembly SufBD family. In terms of processing, this protein undergoes a protein self splicing that involves a post-translational excision of the intervening region (intein) followed by peptide ligation.

This chain is Iron-sulfur cluster assembly SufBD family protein ML0593, found in Mycobacterium leprae (strain TN).